A 252-amino-acid polypeptide reads, in one-letter code: Triosephosphate isomerase (252 aa).

Position 10 to 12 (10 to 12 (NWK)) interacts with substrate. The active-site Electrophile is His96. Glu168 acts as the Proton acceptor in catalysis. Substrate contacts are provided by residues Gly174, Ser214, and 235–236 (GG).

The protein belongs to the triosephosphate isomerase family. As to quaternary structure, homodimer.

It localises to the cytoplasm. The enzyme catalyses D-glyceraldehyde 3-phosphate = dihydroxyacetone phosphate. The protein operates within carbohydrate biosynthesis; gluconeogenesis. It participates in carbohydrate degradation; glycolysis; D-glyceraldehyde 3-phosphate from glycerone phosphate: step 1/1. In terms of biological role, involved in the gluconeogenesis. Catalyzes stereospecifically the conversion of dihydroxyacetone phosphate (DHAP) to D-glyceraldehyde-3-phosphate (G3P). The chain is Triosephosphate isomerase from Lactobacillus helveticus (strain DPC 4571).